The sequence spans 323 residues: tRNA U34 carboxymethyltransferase (323 aa).

Carboxy-S-adenosyl-L-methionine is bound by residues K91, W105, K110, G130, 152–154 (DPS), 181–182 (IE), M196, Y200, and R315.

The protein belongs to the class I-like SAM-binding methyltransferase superfamily. CmoB family. Homotetramer.

It catalyses the reaction carboxy-S-adenosyl-L-methionine + 5-hydroxyuridine(34) in tRNA = 5-carboxymethoxyuridine(34) in tRNA + S-adenosyl-L-homocysteine + H(+). Its function is as follows. Catalyzes carboxymethyl transfer from carboxy-S-adenosyl-L-methionine (Cx-SAM) to 5-hydroxyuridine (ho5U) to form 5-carboxymethoxyuridine (cmo5U) at position 34 in tRNAs. This chain is tRNA U34 carboxymethyltransferase, found in Vibrio parahaemolyticus serotype O3:K6 (strain RIMD 2210633).